Here is a 330-residue protein sequence, read N- to C-terminus: Phosphate acyltransferase (330 aa).

Belongs to the PlsX family. In terms of assembly, homodimer. Probably interacts with PlsY.

Its subcellular location is the cytoplasm. It carries out the reaction a fatty acyl-[ACP] + phosphate = an acyl phosphate + holo-[ACP]. Its pathway is lipid metabolism; phospholipid metabolism. Functionally, catalyzes the reversible formation of acyl-phosphate (acyl-PO(4)) from acyl-[acyl-carrier-protein] (acyl-ACP). This enzyme utilizes acyl-ACP as fatty acyl donor, but not acyl-CoA. This is Phosphate acyltransferase from Streptococcus agalactiae serotype III (strain NEM316).